Consider the following 414-residue polypeptide: tRNA(Ile)-lysidine synthase (414 aa).

17 to 22 lines the ATP pocket; sequence SGGCDS.

Belongs to the tRNA(Ile)-lysidine synthase family.

The protein localises to the cytoplasm. The enzyme catalyses cytidine(34) in tRNA(Ile2) + L-lysine + ATP = lysidine(34) in tRNA(Ile2) + AMP + diphosphate + H(+). In terms of biological role, ligates lysine onto the cytidine present at position 34 of the AUA codon-specific tRNA(Ile) that contains the anticodon CAU, in an ATP-dependent manner. Cytidine is converted to lysidine, thus changing the amino acid specificity of the tRNA from methionine to isoleucine. This is tRNA(Ile)-lysidine synthase from Exiguobacterium sibiricum (strain DSM 17290 / CCUG 55495 / CIP 109462 / JCM 13490 / 255-15).